Consider the following 624-residue polypeptide: Chaperone protein HtpG (624 aa).

Residues 1–338 (MNNKNKITHT…SQDLPLNISR (338 aa)) form an a; substrate-binding region. The b stretch occupies residues 339 to 552 (EILQDSSITH…TNDMSTQMAK (214 aa)). Residues 553-624 (IFSAAGQPIP…IQRINNFFIS (72 aa)) are c.

The protein belongs to the heat shock protein 90 family. Homodimer.

It is found in the cytoplasm. In terms of biological role, molecular chaperone. Has ATPase activity. The protein is Chaperone protein HtpG of Buchnera aphidicola subsp. Cinara cedri (strain Cc).